Consider the following 207-residue polypeptide: Outer-membrane lipoprotein carrier protein (207 aa).

The N-terminal stretch at 1-23 (MMKPHNLFQFLAVCSLTVAVASA) is a signal peptide.

Belongs to the LolA family. In terms of assembly, monomer.

The protein localises to the periplasm. In terms of biological role, participates in the translocation of lipoproteins from the inner membrane to the outer membrane. Only forms a complex with a lipoprotein if the residue after the N-terminal Cys is not an aspartate (The Asp acts as a targeting signal to indicate that the lipoprotein should stay in the inner membrane). The polypeptide is Outer-membrane lipoprotein carrier protein (Neisseria gonorrhoeae (strain ATCC 700825 / FA 1090)).